The sequence spans 37 residues: Large ribosomal subunit protein bL36 (37 aa).

The protein belongs to the bacterial ribosomal protein bL36 family.

This chain is Large ribosomal subunit protein bL36, found in Halorhodospira halophila (strain DSM 244 / SL1) (Ectothiorhodospira halophila (strain DSM 244 / SL1)).